The primary structure comprises 545 residues: Cytochrome P450 10 (545 aa).

Cys493 is a binding site for heme.

Belongs to the cytochrome P450 family. It depends on heme as a cofactor. In terms of tissue distribution, abundantly expressed in the female gonadotropic hormone producing dorsal bodies.

Functionally, may be involved in the synthesis of the female gonadotropic hormone produced by the dorsal bodies. The polypeptide is Cytochrome P450 10 (CYP10) (Lymnaea stagnalis (Great pond snail)).